The primary structure comprises 327 residues: Urease accessory protein 4 (327 aa).

Residue Asn120 is glycosylated (N-linked (GlcNAc...) asparagine). The helical transmembrane segment at 239 to 259 (VYATVLIIGPHLTTLFSYLAY) threads the bilayer.

The protein belongs to the UreD family. As to quaternary structure, URE4, URE6 and URE7 may form a complex that acts as a GTP-hydrolysis-dependent molecular chaperone, activating the urease apoprotein URE1.

The protein localises to the membrane. Functionally, urease accessory protein required for the maturation and activation of urease via the functional incorporation of the urease nickel metallocenter. Plays a role in host brain invasion. The chain is Urease accessory protein 4 from Cryptococcus neoformans var. grubii serotype A (strain H99 / ATCC 208821 / CBS 10515 / FGSC 9487) (Filobasidiella neoformans var. grubii).